A 505-amino-acid chain; its full sequence is ATP nucleosidase Cap17 (505 aa).

The tract at residues 1–229 (MTNTNNEYVL…RLSEIAVELL (229 aa)) is cyclic oligonucleotide sensing-domain. The tract at residues 239-505 (LHTPSVLILT…DYLQHGWIRA (267 aa)) is purine nucleoside phosphorylase domain.

Belongs to the Cap17 family.

It carries out the reaction ATP + H2O = D-ribose 5-triphosphate + adenine. The enzyme catalyses dATP + H2O = 2-deoxyribose 5-triphosphate + adenine. In terms of biological role, effector protein with (d)ATP degrading activity of a CBASS antivirus system. CBASS (cyclic oligonucleotide-based antiphage signaling system) provides immunity against bacteriophage. A CD-NTase protein synthesizes cyclic nucleotides in response to infection; these serve as specific second messenger signals. The signals activate a diverse range of effectors, leading to bacterial cell death and thus abortive phage infection. A type III CBASS system. Expression of this CBASS system (Cap18-Cap6-Cap7-CdnC-CapW-Cap17) in a susceptible E.coli (strain MG1655) confers resistance to bacteriophage P1, leading to cell lysis. By 50 minutes post-infection, ATP levels are markedly reduced while dATP has been eliminated. The C-terminal purine nucleoside phosphorylase (PNP) domain cleaves the N-glycosidic bond of (d)ATP to release adenine and a sugar triphosphate; has no activity on other (d)NTPs, nor on DNA or RNA. In vivo during phage infection has pleoitropic effects on nucleotide accumulation. This protein may be activated by the cognate CD-NTase (CdnC). This is ATP nucleosidase Cap17 from Escherichia coli (strain KTE188).